The sequence spans 411 residues: Putative ion-transport protein YfeO (411 aa).

Helical transmembrane passes span 9–29 (MLLL…VLIA), 54–74 (DSPF…GLII), 99–119 (ALPG…SLGP), 149–169 (ILAS…AALI), 186–206 (LFAP…FFHP), 223–243 (IASG…AVWC), 258–278 (VLIL…GGPL), 296–316 (LGAG…VIAA), 322–342 (GGRI…LHAH), 343–363 (VEAV…VLVV), and 386–406 (LLCI…LLAA).

The protein belongs to the chloride channel (TC 2.A.49) family.

It is found in the cell membrane. In Salmonella choleraesuis (strain SC-B67), this protein is Putative ion-transport protein YfeO.